We begin with the raw amino-acid sequence, 437 residues long: Ribosomal protein uS12 methylthiotransferase RimO (437 aa).

An MTTase N-terminal domain is found at 4–114 (PRVSFVSLGC…VMSAVHEAVP (111 aa)). [4Fe-4S] cluster-binding residues include cysteine 13, cysteine 49, cysteine 78, cysteine 145, cysteine 149, and cysteine 152. The Radical SAM core domain occupies 131 to 369 (LTPRHYAYLK…MAKQQQISTN (239 aa)). The TRAM domain maps to 372–437 (KKKVGKRLPV…DAYDLHGIAV (66 aa)).

Belongs to the methylthiotransferase family. RimO subfamily. It depends on [4Fe-4S] cluster as a cofactor.

It is found in the cytoplasm. It carries out the reaction L-aspartate(89)-[ribosomal protein uS12]-hydrogen + (sulfur carrier)-SH + AH2 + 2 S-adenosyl-L-methionine = 3-methylsulfanyl-L-aspartate(89)-[ribosomal protein uS12]-hydrogen + (sulfur carrier)-H + 5'-deoxyadenosine + L-methionine + A + S-adenosyl-L-homocysteine + 2 H(+). In terms of biological role, catalyzes the methylthiolation of an aspartic acid residue of ribosomal protein uS12. This is Ribosomal protein uS12 methylthiotransferase RimO from Brucella anthropi (strain ATCC 49188 / DSM 6882 / CCUG 24695 / JCM 21032 / LMG 3331 / NBRC 15819 / NCTC 12168 / Alc 37) (Ochrobactrum anthropi).